Reading from the N-terminus, the 766-residue chain is AGGKQILSDGPFSEVLRSAQEAIVVPPFVAIAVRPRPGVWEYVRVNVSELNVEQLTVSEYLHFKEELVDGKADDHYVLELDFEPFNESVPRPTRSSSIGNGVQFLNRHLSSSMFCNKDCLEPLLDFLRVHKHKGVVMMLNDRIQTIQRLQSALSKAEDYLIKLPADTPYSEFEFVIQGMGFERGWGDTAERVLEMMHLLLDILQAPDPSTLETFLGRLPMVFNVVILSVHGYFGQAHVLGLPDTGGQIVYILDQVRSLEHEMLQRIKKQGLDVTPRILIVSRLIPDAKGTTCNQRMEKVSGTEHASILRVPFRSEKGILRKWISRFDVWPYLETFTEDAAGEIIGELQGRPDLIIGNYSDGNIVASLLSHKMGVTQCNIAHALEKTKYPDSDIYWKRFEDKYHFSCQFSADLMAMNHADFIITSTYQEIAGTKNTVGQYESHKAFTFPGLYRVVHGIDVFDPKFNIVSPGADMAIYFPFSEKDVTCLTSLHRLIEQLLFKPEQNEEHIGVLDDTSKPIIFSMARLDRVKNITGLVECYGKNAKLRELANLVVVAGYNDVKKSNDREEIAEIEKMHRLIQEYNLRGQFRWIASQTNRVRNGELYRYICDKGGIFAQPAFYEAFGLTVVEAMTCGLPTFATCHGGPAEIIEDGVSGFHIDPYHADQAEKMTEFFVKCREDPNYWTKISAGGLLRIKERYTWQKYSERLMTLAGVYGFWKYVSKLERRETRRYLEMFYILKFRDLANSVPLATDEEPSTTDAVATFRGP.

The GT-B glycosyltransferase stretch occupies residues 220–698 (MVFNVVILSV…GLLRIKERYT (479 aa)).

It belongs to the glycosyltransferase 1 family. Plant sucrose synthase subfamily. In terms of tissue distribution, expressed most predominantly in tap root.

The catalysed reaction is an NDP-alpha-D-glucose + D-fructose = a ribonucleoside 5'-diphosphate + sucrose + H(+). Sucrose-cleaving enzyme that provides UDP-glucose and fructose for various metabolic pathways. The polypeptide is Sucrose synthase (SS1) (Beta vulgaris (Sugar beet)).